Here is a 122-residue protein sequence, read N- to C-terminus: Large ribosomal subunit protein uL14 (122 aa).

Belongs to the universal ribosomal protein uL14 family. As to quaternary structure, part of the 50S ribosomal subunit. Forms a cluster with proteins L3 and L19. In the 70S ribosome, L14 and L19 interact and together make contacts with the 16S rRNA in bridges B5 and B8.

Its function is as follows. Binds to 23S rRNA. Forms part of two intersubunit bridges in the 70S ribosome. The sequence is that of Large ribosomal subunit protein uL14 from Pelagibacter ubique (strain HTCC1062).